A 393-amino-acid chain; its full sequence is Glycerol-3-phosphate dehydrogenase [NAD(+)] 1 (393 aa).

NAD(+) contacts are provided by residues 45-50 (GSGNWG), Phe-133, Lys-157, and Ala-190. Lys-157 is a binding site for substrate. The active-site Proton acceptor is Lys-250. NAD(+) contacts are provided by Arg-316 and Gln-345. 316–317 (RN) serves as a coordination point for substrate.

It belongs to the NAD-dependent glycerol-3-phosphate dehydrogenase family.

The enzyme catalyses sn-glycerol 3-phosphate + NAD(+) = dihydroxyacetone phosphate + NADH + H(+). In Cyberlindnera jadinii (Torula yeast), this protein is Glycerol-3-phosphate dehydrogenase [NAD(+)] 1 (gpd1).